A 254-amino-acid chain; its full sequence is Alcohol dehydrogenase 1 (254 aa).

Position 10–33 (10–33 (FVAGLGGIGFDTSREIVKSGPKNL)) interacts with NAD(+). S138 lines the substrate pocket. Residue Y151 is the Proton acceptor of the active site.

The protein belongs to the short-chain dehydrogenases/reductases (SDR) family. As to quaternary structure, homodimer.

The catalysed reaction is a primary alcohol + NAD(+) = an aldehyde + NADH + H(+). It catalyses the reaction a secondary alcohol + NAD(+) = a ketone + NADH + H(+). This chain is Alcohol dehydrogenase 1 (Adh1), found in Drosophila mulleri (Fruit fly).